The following is a 474-amino-acid chain: tRNA-2-methylthio-N(6)-dimethylallyladenosine synthase (474 aa).

Positions 3–120 (KKLHIKTWGC…LPEMINSVRG (118 aa)) constitute an MTTase N-terminal domain. Residues cysteine 12, cysteine 49, cysteine 83, cysteine 157, cysteine 161, and cysteine 164 each coordinate [4Fe-4S] cluster. Positions 143–375 (RAEGPTAFVS…QERINQQAMA (233 aa)) constitute a Radical SAM core domain. One can recognise a TRAM domain in the interval 378-441 (RRMLGTTQRI…PNSLRGKVVR (64 aa)).

The protein belongs to the methylthiotransferase family. MiaB subfamily. Monomer. Requires [4Fe-4S] cluster as cofactor.

Its subcellular location is the cytoplasm. It carries out the reaction N(6)-dimethylallyladenosine(37) in tRNA + (sulfur carrier)-SH + AH2 + 2 S-adenosyl-L-methionine = 2-methylsulfanyl-N(6)-dimethylallyladenosine(37) in tRNA + (sulfur carrier)-H + 5'-deoxyadenosine + L-methionine + A + S-adenosyl-L-homocysteine + 2 H(+). Functionally, catalyzes the methylthiolation of N6-(dimethylallyl)adenosine (i(6)A), leading to the formation of 2-methylthio-N6-(dimethylallyl)adenosine (ms(2)i(6)A) at position 37 in tRNAs that read codons beginning with uridine. The polypeptide is tRNA-2-methylthio-N(6)-dimethylallyladenosine synthase (Salmonella enteritidis PT4 (strain P125109)).